The sequence spans 563 residues: Pyruvate decarboxylase (563 aa).

Positions 28 and 115 each coordinate pyruvate. Thiamine diphosphate contacts are provided by residues T390 and G413–I415. D444 contributes to the Mg(2+) binding site. Thiamine diphosphate contacts are provided by residues G445 to S446 and N471 to I476. Residues N471 and G473 each coordinate Mg(2+). E477 lines the pyruvate pocket.

The protein belongs to the TPP enzyme family. In terms of assembly, homotetramer. It depends on Mg(2+) as a cofactor. Thiamine diphosphate serves as cofactor.

It carries out the reaction a 2-oxocarboxylate + H(+) = an aldehyde + CO2. The enzyme catalyses pyruvate + H(+) = acetaldehyde + CO2. The protein is Pyruvate decarboxylase (PDC1) of Kluyveromyces lactis (strain ATCC 8585 / CBS 2359 / DSM 70799 / NBRC 1267 / NRRL Y-1140 / WM37) (Yeast).